The following is a 199-amino-acid chain: Putative inactive ribonuclease 11 (199 aa).

The first 16 residues, 1–16, serve as a signal peptide directing secretion; sequence METFPLLLLSLGLVLA. The N-linked (GlcNAc...) asparagine glycan is linked to asparagine 61. The active-site Proton acceptor is histidine 82. N-linked (GlcNAc...) asparagine glycosylation is found at asparagine 89 and asparagine 111. Intrachain disulfides connect cysteine 98–cysteine 158 and cysteine 114–cysteine 169. 115–119 contributes to the substrate binding site; sequence KWSNN.

It belongs to the pancreatic ribonuclease family.

It is found in the secreted. In Homo sapiens (Human), this protein is Putative inactive ribonuclease 11 (RNASE11).